A 644-amino-acid chain; its full sequence is MIRIRFGMDVLLVLLLATCLLTPAHGTPLEWDFAVTLRTKIQFMDSSWQTIATAAHEFDELSALTFDESEELIYFNDLKHRNGSIFSLKRDLVAANHVAEQTIARTGNESVGGLAYDPLNMNLFWSDTEQRKIFFAPIYGSATPKVLVDLSAEGGRPDGVAVDVCRRKLYWTNSNVTHPTVERINLDGSNRTVIINSDIDMPRGIVVDQLSDRLFWIDDLKGVFFSVESCKLDGSDRQVVLKDKHHEPLNLAVTNDAIYWTDRTTRAVWSHPKVPVIKVTTTSKPEEEDSTDSTDFTDPEPMAEDCPLVRVANLSEEARGIVVRTGFYQRLQKDHHCASIVRKVKERVVEQNRKFEIRSMLDQKIKVLEDERCMNGGEYRAATDLCICPTGFKGSRCEIRECHNYCVHGTCQMSELAYPKCYCQPGFTGERCELSVCSGLCLNGGHCRVSKDENEAPSCECPAKFGGARCEQNSTEICSLFCRLLKHEPEMYVPFGCHSICEELAQDNSTYIAVPQYEHLEVCLTPRVWTSSVIIILVVGIVSSLLLVAVIVHGIRRLYKPKRPRIRKTFVVRKQARTNSAGDTPLTNRPLATEQCEITIENCCNMNICETPCFDPKLVEQTLSKSSCKEDKKILIHNMEDDLY.

Residues 1-26 form the signal peptide; it reads MIRIRFGMDVLLVLLLATCLLTPAHG. Residues 27–531 are Extracellular-facing; the sequence is TPLEWDFAVT…VCLTPRVWTS (505 aa). N-linked (GlcNAc...) asparagine glycosylation is found at N82 and N108. 3 LDL-receptor class B repeats span residues 121–166, 167–211, and 212–257; these read MNLF…DVCR, RKLY…DQLS, and DRLF…TNDA. N-linked (GlcNAc...) asparagine glycosylation is found at N175 and N190. The tract at residues 280–301 is disordered; it reads TTTSKPEEEDSTDSTDFTDPEP. A compositionally biased stretch (acidic residues) spans 286 to 301; the sequence is EEEDSTDSTDFTDPEP. N313 carries an N-linked (GlcNAc...) asparagine glycan. EGF-like domains are found at residues 398 to 430 and 433 to 471; these read EIRE…FTGE and ELSV…ARCE. Disulfide bonds link C402-C411, C406-C421, C437-C447, C441-C459, and C461-C470. N473 and N508 each carry an N-linked (GlcNAc...) asparagine glycan. The helical transmembrane segment at 532–552 threads the bilayer; the sequence is SVIIILVVGIVSSLLLVAVIV. Over 553-644 the chain is Cytoplasmic; it reads HGIRRLYKPK…LIHNMEDDLY (92 aa).

The protein belongs to the cueball family.

Its subcellular location is the cell membrane. Functionally, has a role in spermatogenesis and oogenesis. The chain is Protein cueball from Drosophila sechellia (Fruit fly).